The chain runs to 802 residues: MDADFRFDPDGSDDDGAAASAAAGRRKPAQSPWEFSSYAESVAAEHARRRTTSIDEKISQALSGSRRGGKPSIPDGDSEGDEDDSEVEDDSEEDDKEVVEGEIDDEEDEVEESEDDDEGVEVSDEEVEELEEGKGEEKSDEVEEGEEGQDGEEEEKEEGDEEAAEEEEETDKKSGVVDPSKFFASSEGASFHANSFLELNLSRPLLRACEALGYQKPTPIQAACIPLALTGRDICGSAITGSGKTAAFSLPVLERLLFRPKRVPAIRVLILTPTRELAAQVHSMIEKLAQFTDIRCCLIVGGLSTKVQEVALRSMPDIVVATPGRIIDHLRNSLSVGLEDLAILILDEADRLLELGFSAEIQELIRMCPRRRQTMLFSATMTEEINELVTLSLNKPVRLEADPSLKRPATLTEEVVRIRRAREANQEAVLLALCLKTFKDKVIIFSGTKHSAHRLKIIFGLSGMKAAELHGNLTQAQRLEALELFKKQEVDFLIATDVAARGIDIVGVRTVINFSCPRDARTYLHRVGRTARAGREGYAVTFVTDDDRSLLKAIAKKAGSQLKSRIVAEKPVAECAKLIEELEDQISTIIQEEREERILRKAEMEATKAENMIAHKDEIYSRPKRTWFATEKEKKLLAKAAKESTSQGKSNSGVISAQQAEDLRLKEKKRREREKNLPRKKRRRLEAEREMLEDESEDEEEAKESKGGKKEKKGQSLVDVAYRRAKSMKASGKRGAGTGKGKNDKKAKQHSGKGPTRQEEMQELFQNDMSEWKQGRSLKKNNVMRKKSKNSFKSKSRYNRRK.

Positions Met-1–Pro-179 are disordered. 2 stretches are compositionally biased toward acidic residues: residues Gly-76–Glu-131 and Lys-138–Glu-169. 2 coiled-coil regions span residues Asp-90 to Val-122 and Gln-149 to Ser-174. A Q motif motif is present at residues Asn-194–Ala-222. The Helicase ATP-binding domain maps to Ile-225–Leu-399. Ala-238–Thr-245 lines the ATP pocket. The DEAD box motif lies at Asp-347–Asp-350. One can recognise a Helicase C-terminal domain in the interval Val-429–Ala-573. Residues Val-572 to Lys-616 adopt a coiled-coil conformation. Residues Lys-639–Lys-802 form a disordered region. Residues Ser-644 to Gln-659 are compositionally biased toward polar residues. The span at Lys-666–Arg-684 shows a compositional bias: basic residues. The stretch at Arg-671–Lys-712 forms a coiled coil. Acidic residues predominate over residues Met-691–Ala-702. Positions Arg-776–Lys-802 are enriched in basic residues.

This sequence belongs to the DEAD box helicase family. DDX27/DRS1 subfamily.

It carries out the reaction ATP + H2O = ADP + phosphate + H(+). This is DEAD-box ATP-dependent RNA helicase 28 from Oryza sativa subsp. japonica (Rice).